The sequence spans 400 residues: MSDNPADLPVLVAGGGIGGLAAALALVRRGFSVKVLEQAPEIGEIGAGIQLGPNAFHAFDALGIGEKARGRAVYTDEMVMHDAIDGSLVGRIPTGEAFRQRFGNPYAVIHRVDVHLSLLEGAQETGKVEFLTSTRALRIEQDEGSVTVYDQHGNAHKGIALIGADGVKSVVREQFVGDAARVTGHVVYRAVVDKKDFPESLQWNAASIWVGPNCHLVHYPLRGGEQYNVVVTFHSRQPEQWGVTEGSKEEVQSYFQGICPQARQLIDLPKTWKRWATADREPIGQWSFGRVTLLGDAAHPTTQYMAQGACMAMEDGVTLGEALRVNNNDFPKAFELYQRSRVARTARIVLSSREMGRIYHAQGVERLVRNDLWKGRTPERFYDAMEWLYGWNVGNCLAKD.

This sequence belongs to the 3-hydroxybenzoate 6-hydroxylase family. In terms of assembly, monomer. FAD is required as a cofactor.

The enzyme catalyses 3-hydroxybenzoate + NADH + O2 + H(+) = 2,5-dihydroxybenzoate + NAD(+) + H2O. Catalyzes the NAD- or NADP-dependent conversion of 3-hydroxybenzoate to gentisate. The affinity of the enzyme toward NAD is twice as high as for NADP. This chain is 3-hydroxybenzoate 6-hydroxylase (nagX), found in Polaromonas naphthalenivorans (strain CJ2).